Here is a 162-residue protein sequence, read N- to C-terminus: 2-C-methyl-D-erythritol 2,4-cyclodiphosphate synthase (162 aa).

2 residues coordinate a divalent metal cation: Asp12 and His14. 4-CDP-2-C-methyl-D-erythritol 2-phosphate is bound by residues 12–14 (DVH) and 38–39 (HS). Residue His46 participates in a divalent metal cation binding. Residues 60–62 (DIG), 136–139 (TTTE), Phe143, and Arg146 each bind 4-CDP-2-C-methyl-D-erythritol 2-phosphate.

This sequence belongs to the IspF family. As to quaternary structure, homotrimer. A divalent metal cation is required as a cofactor.

It catalyses the reaction 4-CDP-2-C-methyl-D-erythritol 2-phosphate = 2-C-methyl-D-erythritol 2,4-cyclic diphosphate + CMP. It functions in the pathway isoprenoid biosynthesis; isopentenyl diphosphate biosynthesis via DXP pathway; isopentenyl diphosphate from 1-deoxy-D-xylulose 5-phosphate: step 4/6. In terms of biological role, involved in the biosynthesis of isopentenyl diphosphate (IPP) and dimethylallyl diphosphate (DMAPP), two major building blocks of isoprenoid compounds. Catalyzes the conversion of 4-diphosphocytidyl-2-C-methyl-D-erythritol 2-phosphate (CDP-ME2P) to 2-C-methyl-D-erythritol 2,4-cyclodiphosphate (ME-CPP) with a corresponding release of cytidine 5-monophosphate (CMP). The sequence is that of 2-C-methyl-D-erythritol 2,4-cyclodiphosphate synthase from Porphyromonas gingivalis (strain ATCC BAA-308 / W83).